Here is a 470-residue protein sequence, read N- to C-terminus: ATP synthase subunit beta (470 aa).

155–162 (GGAGVGKT) lines the ATP pocket.

Belongs to the ATPase alpha/beta chains family. In terms of assembly, F-type ATPases have 2 components, CF(1) - the catalytic core - and CF(0) - the membrane proton channel. CF(1) has five subunits: alpha(3), beta(3), gamma(1), delta(1), epsilon(1). CF(0) has three main subunits: a(1), b(2) and c(9-12). The alpha and beta chains form an alternating ring which encloses part of the gamma chain. CF(1) is attached to CF(0) by a central stalk formed by the gamma and epsilon chains, while a peripheral stalk is formed by the delta and b chains.

It localises to the cell membrane. It catalyses the reaction ATP + H2O + 4 H(+)(in) = ADP + phosphate + 5 H(+)(out). Functionally, produces ATP from ADP in the presence of a proton gradient across the membrane. The catalytic sites are hosted primarily by the beta subunits. The chain is ATP synthase subunit beta from Staphylococcus haemolyticus (strain JCSC1435).